The primary structure comprises 890 residues: DNA mismatch repair protein MutS (890 aa).

607–614 (GPNMSGKS) provides a ligand contact to ATP.

The protein belongs to the DNA mismatch repair MutS family.

Functionally, this protein is involved in the repair of mismatches in DNA. It is possible that it carries out the mismatch recognition step. This protein has a weak ATPase activity. In Bacillus mycoides (strain KBAB4) (Bacillus weihenstephanensis), this protein is DNA mismatch repair protein MutS.